Reading from the N-terminus, the 195-residue chain is ATP-dependent Clp protease proteolytic subunit (195 aa).

Serine 98 acts as the Nucleophile in catalysis. The active site involves histidine 123.

It belongs to the peptidase S14 family. Fourteen ClpP subunits assemble into 2 heptameric rings which stack back to back to give a disk-like structure with a central cavity, resembling the structure of eukaryotic proteasomes.

It localises to the cytoplasm. The enzyme catalyses Hydrolysis of proteins to small peptides in the presence of ATP and magnesium. alpha-casein is the usual test substrate. In the absence of ATP, only oligopeptides shorter than five residues are hydrolyzed (such as succinyl-Leu-Tyr-|-NHMec, and Leu-Tyr-Leu-|-Tyr-Trp, in which cleavage of the -Tyr-|-Leu- and -Tyr-|-Trp bonds also occurs).. Cleaves peptides in various proteins in a process that requires ATP hydrolysis. Has a chymotrypsin-like activity. Plays a major role in the degradation of misfolded proteins. This chain is ATP-dependent Clp protease proteolytic subunit, found in Helicobacter pylori (strain Shi470).